A 251-amino-acid polypeptide reads, in one-letter code: uncharacterized protein (251 aa).

A disordered region spans residues Ala-207 to Arg-251.

This is an uncharacterized protein from Treponema pallidum (strain Nichols).